A 265-amino-acid chain; its full sequence is Shikimate dehydrogenase (NADP(+)) (265 aa).

Residues 15 to 17 (SLS) and threonine 62 contribute to the shikimate site. Lysine 66 functions as the Proton acceptor in the catalytic mechanism. Glutamate 78 lines the NADP(+) pocket. Positions 87 and 102 each coordinate shikimate. Residues 126-130 (GAGGV), 150-155 (NRTELK), and valine 210 each bind NADP(+). Shikimate is bound at residue tyrosine 212. Glycine 233 lines the NADP(+) pocket.

Belongs to the shikimate dehydrogenase family. Homodimer.

The catalysed reaction is shikimate + NADP(+) = 3-dehydroshikimate + NADPH + H(+). It participates in metabolic intermediate biosynthesis; chorismate biosynthesis; chorismate from D-erythrose 4-phosphate and phosphoenolpyruvate: step 4/7. Functionally, involved in the biosynthesis of the chorismate, which leads to the biosynthesis of aromatic amino acids. Catalyzes the reversible NADPH linked reduction of 3-dehydroshikimate (DHSA) to yield shikimate (SA). This Pelagibacter ubique (strain HTCC1062) protein is Shikimate dehydrogenase (NADP(+)).